Consider the following 44-residue polypeptide: Conotoxin Sr5.5 (44 aa).

The first 19 residues, 1 to 19 (MRCLPVFVILLLLIASAPS), serve as a signal peptide directing secretion. Residues 20 to 29 (VDDNAKGTQH) constitute a propeptide that is removed on maturation.

It belongs to the conotoxin T superfamily. Post-translationally, contains 2 disulfide bonds that can be either 'C1-C3, C2-C4' or 'C1-C4, C2-C3', since these disulfide connectivities have been observed for conotoxins with cysteine framework V (for examples, see AC P0DQQ7 and AC P81755). As to expression, expressed by the venom duct.

The protein localises to the secreted. The chain is Conotoxin Sr5.5 from Conus spurius (Alphabet cone).